A 389-amino-acid chain; its full sequence is Sulfate adenylyltransferase (389 aa).

It belongs to the sulfate adenylyltransferase family.

The catalysed reaction is sulfate + ATP + H(+) = adenosine 5'-phosphosulfate + diphosphate. It participates in sulfur metabolism; hydrogen sulfide biosynthesis; sulfite from sulfate: step 1/3. The chain is Sulfate adenylyltransferase from Desulforamulus reducens (strain ATCC BAA-1160 / DSM 100696 / MI-1) (Desulfotomaculum reducens).